Here is a 184-residue protein sequence, read N- to C-terminus: Tyrosine-protein kinase receptor Tie-1 (184 aa).

The Protein kinase domain occupies 1 to 164; it reads QLLQFAADVA…RMQEARKAYV (164 aa). Asp-25 functions as the Proton acceptor in the catalytic mechanism. Tyr-53 carries the phosphotyrosine; by autocatalysis modification.

This sequence belongs to the protein kinase superfamily. Tyr protein kinase family. Tie subfamily. In terms of assembly, interacts with svep1. As to expression, expressed in most populations of endothelial cells in 24 hours embryos, including the endocardium.

The protein localises to the cell membrane. It catalyses the reaction L-tyrosyl-[protein] + ATP = O-phospho-L-tyrosyl-[protein] + ADP + H(+). Transmembrane tyrosine-protein kinase. Required for the formation of facial lymphatic structures and brain lymphatic endothelial cells. Also required for embryonic ventral and dorsal migration of parachordal lymphoblasts along the arterial intersegmental vessel. Plays a role in the embryonic formation of the dorsal longitudinal anastomotic vessel. In Danio rerio (Zebrafish), this protein is Tyrosine-protein kinase receptor Tie-1 (tie1).